The sequence spans 101 residues: Citrate lyase acyl carrier protein (101 aa).

Position 14 is an O-(phosphoribosyl dephospho-coenzyme A)serine (S14).

This sequence belongs to the CitD family. In terms of assembly, oligomer with a subunit composition of (alpha,beta,gamma)6.

It localises to the cytoplasm. In terms of biological role, covalent carrier of the coenzyme of citrate lyase. This chain is Citrate lyase acyl carrier protein, found in Streptococcus uberis (strain ATCC BAA-854 / 0140J).